The primary structure comprises 541 residues: Chaperonin GroEL 2 (541 aa).

Residues 29–32, 86–90, Gly-413, 476–478, and Asp-492 contribute to the ATP site; these read TLGP, DGTTT, and NAA.

It belongs to the chaperonin (HSP60) family. In terms of assembly, forms a cylinder of 14 subunits composed of two heptameric rings stacked back-to-back. Interacts with the co-chaperonin GroES.

It is found in the secreted. The protein resides in the capsule. The protein localises to the cell surface. Its subcellular location is the cell wall. It carries out the reaction ATP + H2O + a folded polypeptide = ADP + phosphate + an unfolded polypeptide.. Its function is as follows. Together with its co-chaperonin GroES, plays an essential role in assisting protein folding. The GroEL-GroES system forms a nano-cage that allows encapsulation of the non-native substrate proteins and provides a physical environment optimized to promote and accelerate protein folding. This Mycobacterium avium (strain 104) protein is Chaperonin GroEL 2.